The primary structure comprises 125 residues: Small ribosomal subunit protein uS12m (125 aa).

Disordered regions lie at residues 1–50 (MPTL…SAPR) and 106–125 (GIPNRRRGRSKYGAERPKSI). Over residues 10 to 23 (HGREEKRRTDRTRA) the composition is skewed to basic and acidic residues.

It belongs to the universal ribosomal protein uS12 family.

The protein localises to the mitochondrion. Protein S12 is involved in the translation initiation step. The sequence is that of Small ribosomal subunit protein uS12m (RPS12) from Magnolia soulangeana (Saucer magnolia).